The sequence spans 3933 residues: Protein DOP1 homolog PFC0245c (3933 aa).

The next 4 membrane-spanning stretches (helical) occupy residues leucine 70 to phenylalanine 90, phenylalanine 98 to isoleucine 118, isoleucine 140 to leucine 160, and isoleucine 163 to leucine 183. 3 disordered regions span residues arginine 468–glycine 494, isoleucine 543–histidine 600, and lysine 614–serine 656. Over residues asparagine 470–asparagine 486 the composition is skewed to low complexity. Residues asparagine 546–tyrosine 561 are compositionally biased toward acidic residues. Composition is skewed to low complexity over residues asparagine 563–asparagine 576 and glutamate 585–asparagine 597. A coiled-coil region spans residues glycine 620–asparagine 651. The segment covering tyrosine 625–asparagine 639 has biased composition (acidic residues). The span at asparagine 640–serine 656 shows a compositional bias: low complexity. The next 3 helical transmembrane spans lie at methionine 782–tyrosine 802, tyrosine 842–leucine 862, and phenylalanine 1186–leucine 1206. Over residues aspartate 1216–glycine 1255 the composition is skewed to acidic residues. Disordered stretches follow at residues aspartate 1216 to lysine 1284 and threonine 1361 to asparagine 1405. Over residues serine 1263–lysine 1284 the composition is skewed to basic residues. A coiled-coil region spans residues glutamate 1349–asparagine 1403. Residues asparagine 1362–asparagine 1405 show a composition bias toward low complexity. Helical transmembrane passes span phenylalanine 1462 to leucine 1482 and lysine 1997 to tyrosine 2017. Residues histidine 2691–asparagine 2739 are disordered. Positions serine 2704–asparagine 2739 are enriched in low complexity. The next 5 membrane-spanning stretches (helical) occupy residues isoleucine 2860–threonine 2880, isoleucine 2905–valine 2925, tyrosine 3017–valine 3037, isoleucine 3200–isoleucine 3220, and isoleucine 3276–phenylalanine 3296. The segment at leucine 3620–glutamate 3646 is disordered. Over residues serine 3637–glutamate 3646 the composition is skewed to acidic residues. A coiled-coil region spans residues lysine 3897 to glutamate 3925.

It belongs to the DOP1 family.

It localises to the membrane. Its function is as follows. May be involved in protein traffic between late Golgi and early endosomes. This chain is Protein DOP1 homolog PFC0245c, found in Plasmodium falciparum (isolate 3D7).